A 412-amino-acid polypeptide reads, in one-letter code: Putative competence-damage inducible protein (412 aa).

Belongs to the CinA family.

The polypeptide is Putative competence-damage inducible protein (Bacillus cereus (strain ZK / E33L)).